The following is a 272-amino-acid chain: Magnetosome protein MamQ (272 aa).

The Cytoplasmic portion of the chain corresponds to 1 to 46 (MAVSDADASSVDKVESITLQRVKQSEELLAQLYVVEESPRRMGRGP). The chain crosses the membrane as a helical span at residues 47 to 67 (VQLMLAISVLSLVAFITTLLM). Topologically, residues 68-272 (RYNAFVTMYE…PLTHSQESKN (205 aa)) are lumenal.

The protein belongs to the LemA family.

It is found in the magnetosome membrane. It localises to the cell inner membrane. Functionally, essential for magnetosome formation. Not essential for formation of magnetosome membrane vesicles. One of 7 genes (mamLQBIEMO) able to induce magnetosome membrane biogenesis; coexpression of mamLQRBIEMO in a deletion of the 17 gene mamAB operon restores magnetosome vesicle formation but not magnetite biosynthesis. The polypeptide is Magnetosome protein MamQ (Magnetospirillum gryphiswaldense (strain DSM 6361 / JCM 21280 / NBRC 15271 / MSR-1)).